Here is a 275-residue protein sequence, read N- to C-terminus: Hydroxyethylthiazole kinase (275 aa).

Met50 is a binding site for substrate. ATP-binding residues include Arg126 and Ser171. A substrate-binding site is contributed by Ala200.

It belongs to the Thz kinase family. Requires Mg(2+) as cofactor.

It carries out the reaction 5-(2-hydroxyethyl)-4-methylthiazole + ATP = 4-methyl-5-(2-phosphooxyethyl)-thiazole + ADP + H(+). It participates in cofactor biosynthesis; thiamine diphosphate biosynthesis; 4-methyl-5-(2-phosphoethyl)-thiazole from 5-(2-hydroxyethyl)-4-methylthiazole: step 1/1. Its function is as follows. Catalyzes the phosphorylation of the hydroxyl group of 4-methyl-5-beta-hydroxyethylthiazole (THZ). This is Hydroxyethylthiazole kinase from Acinetobacter baumannii (strain ATCC 17978 / DSM 105126 / CIP 53.77 / LMG 1025 / NCDC KC755 / 5377).